Here is a 472-residue protein sequence, read N- to C-terminus: Argininosuccinate lyase (472 aa).

Belongs to the lyase 1 family. Argininosuccinate lyase subfamily.

It localises to the cytoplasm. The enzyme catalyses 2-(N(omega)-L-arginino)succinate = fumarate + L-arginine. It functions in the pathway amino-acid biosynthesis; L-arginine biosynthesis; L-arginine from L-ornithine and carbamoyl phosphate: step 3/3. In Mycobacterium avium (strain 104), this protein is Argininosuccinate lyase.